The primary structure comprises 188 residues: GTP cyclohydrolase 1 (188 aa).

Zn(2+)-binding residues include Cys-78, His-81, and Cys-150.

It belongs to the GTP cyclohydrolase I family. In terms of assembly, toroid-shaped homodecamer, composed of two pentamers of five dimers.

The enzyme catalyses GTP + H2O = 7,8-dihydroneopterin 3'-triphosphate + formate + H(+). It participates in cofactor biosynthesis; 7,8-dihydroneopterin triphosphate biosynthesis; 7,8-dihydroneopterin triphosphate from GTP: step 1/1. The protein is GTP cyclohydrolase 1 of Halalkalibacterium halodurans (strain ATCC BAA-125 / DSM 18197 / FERM 7344 / JCM 9153 / C-125) (Bacillus halodurans).